A 208-amino-acid chain; its full sequence is Protein GrpE (208 aa).

Residues 1–12 are compositionally biased toward basic and acidic residues; it reads MTNKDESVKKNT. Residues 1–51 form a disordered region; it reads MTNKDESVKKNTESTVEETNVKQNIDDSVEQAEESKGHLQDEAIEETSDEN. The span at 13–23 shows a compositional bias: polar residues; the sequence is ESTVEETNVKQ. Positions 42-51 are enriched in acidic residues; it reads EAIEETSDEN.

This sequence belongs to the GrpE family. As to quaternary structure, homodimer.

Its subcellular location is the cytoplasm. Functionally, participates actively in the response to hyperosmotic and heat shock by preventing the aggregation of stress-denatured proteins, in association with DnaK and GrpE. It is the nucleotide exchange factor for DnaK and may function as a thermosensor. Unfolded proteins bind initially to DnaJ; upon interaction with the DnaJ-bound protein, DnaK hydrolyzes its bound ATP, resulting in the formation of a stable complex. GrpE releases ADP from DnaK; ATP binding to DnaK triggers the release of the substrate protein, thus completing the reaction cycle. Several rounds of ATP-dependent interactions between DnaJ, DnaK and GrpE are required for fully efficient folding. This is Protein GrpE from Staphylococcus aureus (strain COL).